Consider the following 314-residue polypeptide: Oxalate oxidoreductase subunit beta (314 aa).

The [4Fe-4S] cluster site is built by Cys24, Cys27, Cys52, and Cys225.

Dimer of heterotrimer of one alpha, one beta and one delta subunit. Requires [4Fe-4S] cluster as cofactor.

It catalyses the reaction oxidized 2[4Fe-4S]-[ferredoxin] + oxalate = reduced 2[4Fe-4S]-[ferredoxin] + 2 CO2. In terms of biological role, catalyzes the anaerobic oxidation of oxalate using a broad range of electron acceptors, including ferredoxin and the nickel-dependent carbon monoxide dehydrogenase. Does not require coenzyme A as cosubstrate. Enables anaerobic growth on oxalate which is used as energy source by the bacteria. The protein is Oxalate oxidoreductase subunit beta of Moorella thermoacetica (strain ATCC 39073 / JCM 9320).